We begin with the raw amino-acid sequence, 285 residues long: Energy-coupling factor transporter ATP-binding protein EcfA2 (285 aa).

Positions 3–245 constitute an ABC transporter domain; that stretch reads INFEQVNFSY…DLVWFKTVAL (243 aa). 40–47 contacts ATP; the sequence is GQTGSGKS. The Proton acceptor role is filled by Glu171.

Belongs to the ABC transporter superfamily. Energy-coupling factor EcfA family. As to quaternary structure, forms a stable energy-coupling factor (ECF) transporter complex probably composed of 2 membrane-embedded substrate-binding proteins (S component), 2 ATP-binding proteins (A component) and 2 transmembrane proteins (T component). This complex interacts with a number of substrate-specific components, including FolT, PanT and RibU for 5-formyltetrahydrofolate, pantothenate and riboflavin respectively.

The protein localises to the cell membrane. In terms of biological role, ATP-binding (A) component of a common energy-coupling factor (ECF) ABC-transporter complex. Unlike classic ABC transporters this ECF transporter provides the energy necessary to transport a number of different substrates including 5-formyltetrahydrofolate, pantothenate and riboflavin. Expression of the complex plus FolT in E.coli allows 5-formyltetrahydrofolate uptake; 5-formyltetrahydrofolate is not taken up in the absence of FolT or the EcfA1A2T complex. This Leuconostoc mesenteroides subsp. mesenteroides (strain ATCC 8293 / DSM 20343 / BCRC 11652 / CCM 1803 / JCM 6124 / NCDO 523 / NBRC 100496 / NCIMB 8023 / NCTC 12954 / NRRL B-1118 / 37Y) protein is Energy-coupling factor transporter ATP-binding protein EcfA2.